Consider the following 168-residue polypeptide: uncharacterized protein (168 aa).

A mitochondrion-targeting transit peptide spans 1-29; the sequence is MGWRFPSPSPRQASPVAPLLAAPTAVRSC. The segment covering 98–110 has biased composition (basic and acidic residues); sequence GETKARRAREEGK. Residues 98-152 form a disordered region; the sequence is GETKARRAREEGKLPSLGNAPAPRRRSVAWPAAEGSCAAPESSPPASEASLPAPE. The span at 128 to 152 shows a compositional bias: low complexity; the sequence is PAAEGSCAAPESSPPASEASLPAPE.

The protein resides in the mitochondrion. This is an uncharacterized protein from Homo sapiens (Human).